Consider the following 335-residue polypeptide: Flagellar P-ring protein (335 aa).

Positions 1–17 (MNKPMLMLITFATSLLA) are cleaved as a signal peptide.

It belongs to the FlgI family. The basal body constitutes a major portion of the flagellar organelle and consists of four rings (L,P,S, and M) mounted on a central rod.

It is found in the periplasm. The protein resides in the bacterial flagellum basal body. Functionally, assembles around the rod to form the L-ring and probably protects the motor/basal body from shearing forces during rotation. The sequence is that of Flagellar P-ring protein from Borreliella burgdorferi (strain ZS7) (Borrelia burgdorferi).